A 420-amino-acid polypeptide reads, in one-letter code: Chaperone protein dnaJ 3 (420 aa).

A J domain is found at 14 to 75; it reads KFYEILGVPK…EKREIYDQYG (62 aa). The CR-type zinc finger occupies 135-219; it reads GTMKKLSLSR…CKGDKVIPEK (85 aa). Zn(2+) contacts are provided by Cys148, Cys151, Cys164, Cys167, Cys191, Cys194, Cys207, and Cys210. CXXCXGXG motif repeat units follow at residues 148–155, 164–171, 191–198, and 207–214; these read CSKCNGKG, CGGCQGSG, CNECKGTG, and CPQCKGDK. The disordered stretch occupies residues 376-420; that stretch reads ETTLHDVNIEDEMRRKAQAQREAYDDDDEDDDHPGGAQRVQCAQQ. Basic and acidic residues predominate over residues 377–390; the sequence is TTLHDVNIEDEMRR. At Cys417 the chain carries Cysteine methyl ester. Cys417 is lipidated: S-farnesyl cysteine. Residues 418 to 420 constitute a propeptide, removed in mature form; it reads AQQ.

The protein belongs to the DnaJ family. A/I subfamily. In terms of assembly, homodimer. Zn(2+) serves as cofactor. Post-translationally, farnesylated. Roots, shoots, flowers, siliques and cotyledons.

The protein resides in the membrane. Its function is as follows. Plays a continuous role in plant development probably in the structural organization of compartments. The chain is Chaperone protein dnaJ 3 (ATJ3) from Arabidopsis thaliana (Mouse-ear cress).